The primary structure comprises 186 residues: MLIGYVRVSTNEQNTALQRNALESAGCELIFEDKASGKKAERPGLKKVLRMLSRGDTLVVWKLDRLGRSMRHLVVLVEELRDRGINFRSLTDSIDTSTPMGRFFFHVMGALAEMERELIVERTRAGLDAARAEGRIGGRRPKYQEETWQQMRRLLEKGIPRKQVAIIYDVAVSTLYKKFPASSFQS.

The Resolvase/invertase-type recombinase catalytic domain maps to 1–134 (MLIGYVRVST…AGLDAARAEG (134 aa)). Ser9 serves as the catalytic O-(5'-phospho-DNA)-serine intermediate. A DNA-binding region (H-T-H motif) is located at residues 161 to 180 (RKQVAIIYDVAVSTLYKKFP).

This sequence belongs to the site-specific recombinase resolvase family.

Its function is as follows. Performs inversion of a viral 3 kp segment (C-segment) that encodes two alternate pairs of tail fiber proteins thereby modifying the host specificity of the virus. This Enterobacteriaceae (Bacteriophage P1) protein is DNA-invertase (cin).